A 325-amino-acid polypeptide reads, in one-letter code: Acetyl-coenzyme A carboxylase carboxyl transferase subunit alpha (325 aa).

Residues 43–297 form the CoA carboxyltransferase C-terminal domain; that stretch reads ELENNSTQLR…KTSLIAHLRQ (255 aa).

The protein belongs to the AccA family. As to quaternary structure, acetyl-CoA carboxylase is a heterohexamer composed of biotin carboxyl carrier protein (AccB), biotin carboxylase (AccC) and two subunits each of ACCase subunit alpha (AccA) and ACCase subunit beta (AccD).

It localises to the cytoplasm. The catalysed reaction is N(6)-carboxybiotinyl-L-lysyl-[protein] + acetyl-CoA = N(6)-biotinyl-L-lysyl-[protein] + malonyl-CoA. It functions in the pathway lipid metabolism; malonyl-CoA biosynthesis; malonyl-CoA from acetyl-CoA: step 1/1. Its function is as follows. Component of the acetyl coenzyme A carboxylase (ACC) complex. First, biotin carboxylase catalyzes the carboxylation of biotin on its carrier protein (BCCP) and then the CO(2) group is transferred by the carboxyltransferase to acetyl-CoA to form malonyl-CoA. This is Acetyl-coenzyme A carboxylase carboxyl transferase subunit alpha from Cyanothece sp. (strain PCC 7425 / ATCC 29141).